A 147-amino-acid polypeptide reads, in one-letter code: Protein KilB (147 aa).

Positions 1-20 are hydrophobic; sequence MVTTLIAVIGTLAGTGLAGL.

In terms of biological role, involved in plasmid transfer. This is Protein KilB (kilB) from Streptomyces lividans.